Consider the following 292-residue polypeptide: Acetylglutamate kinase (292 aa).

Substrate-binding positions include 64–65 (GG), R86, and N190.

Belongs to the acetylglutamate kinase family. ArgB subfamily.

The protein resides in the cytoplasm. It carries out the reaction N-acetyl-L-glutamate + ATP = N-acetyl-L-glutamyl 5-phosphate + ADP. It functions in the pathway amino-acid biosynthesis; L-arginine biosynthesis; N(2)-acetyl-L-ornithine from L-glutamate: step 2/4. Catalyzes the ATP-dependent phosphorylation of N-acetyl-L-glutamate. The polypeptide is Acetylglutamate kinase (Geotalea uraniireducens (strain Rf4) (Geobacter uraniireducens)).